Reading from the N-terminus, the 257-residue chain is MLARRIIPCLDVRDGLVVKGVKFRNHETIGEIVPLAELYAQQGADELVFYDITASSDQRVVDKSWVTRIAQVIDIPFCVAGGIKSVEDAGRILEMGADKISINSPALANPSLIRELHDTFGQQCVVVGIDSYFNEETGKYQVHQYTGDESRTQITRWQTADWVKEVQQHGAGEIVLNCMNQDGVRQGYDITQLTAIRENCAVPLIASGGAGEKVHFKDVFEQADVDGALAASVFHKGIIPIPELKAYLREQQVAIRD.

Catalysis depends on residues Asp-11 and Asp-130.

The protein belongs to the HisA/HisF family. Heterodimer of HisH and HisF.

The protein resides in the cytoplasm. The catalysed reaction is 5-[(5-phospho-1-deoxy-D-ribulos-1-ylimino)methylamino]-1-(5-phospho-beta-D-ribosyl)imidazole-4-carboxamide + L-glutamine = D-erythro-1-(imidazol-4-yl)glycerol 3-phosphate + 5-amino-1-(5-phospho-beta-D-ribosyl)imidazole-4-carboxamide + L-glutamate + H(+). The protein operates within amino-acid biosynthesis; L-histidine biosynthesis; L-histidine from 5-phospho-alpha-D-ribose 1-diphosphate: step 5/9. Functionally, IGPS catalyzes the conversion of PRFAR and glutamine to IGP, AICAR and glutamate. The HisF subunit catalyzes the cyclization activity that produces IGP and AICAR from PRFAR using the ammonia provided by the HisH subunit. The sequence is that of Imidazole glycerol phosphate synthase subunit HisF from Pseudoalteromonas atlantica (strain T6c / ATCC BAA-1087).